The primary structure comprises 89 residues: Small ribosomal subunit protein uS15 (89 aa).

The protein belongs to the universal ribosomal protein uS15 family. Part of the 30S ribosomal subunit. Forms a bridge to the 50S subunit in the 70S ribosome, contacting the 23S rRNA.

Its function is as follows. One of the primary rRNA binding proteins, it binds directly to 16S rRNA where it helps nucleate assembly of the platform of the 30S subunit by binding and bridging several RNA helices of the 16S rRNA. Functionally, forms an intersubunit bridge (bridge B4) with the 23S rRNA of the 50S subunit in the ribosome. The chain is Small ribosomal subunit protein uS15 from Yersinia enterocolitica serotype O:8 / biotype 1B (strain NCTC 13174 / 8081).